The sequence spans 387 residues: Oxidase FUB9 (387 aa).

Residues 1–20 (MSRTNLPIQPAKMSDATSSK) form a disordered region. Residues 18–379 (SSKPQIFSIQ…TPAHLSLLNA (362 aa)) form the FMN hydroxy acid dehydrogenase domain. Tyr-44 contacts a 2-oxocarboxylate. FMN-binding residues include Ser-126, Gln-150, and Thr-178. An a 2-oxocarboxylate-binding site is contributed by Arg-187. FMN is bound at residue Lys-250. His-274 serves as the catalytic Proton acceptor. Residue Arg-277 coordinates a 2-oxocarboxylate. FMN is bound by residues 305–309 (DGGFR) and 328–329 (GR).

The protein belongs to the FMN-dependent alpha-hydroxy acid dehydrogenase family. The cofactor is FMN.

It functions in the pathway mycotoxin biosynthesis. Its function is as follows. Oxidase; part of the gene cluster that mediates the biosynthesis of fusaric acid, a mycotoxin with low to moderate toxicity to animals and humans, but with high phytotoxic properties. L-aspartate is suggested as fusaric acid amino acid precursor that is activated and further processed to O-acetyl-L-homoserine by cluster enzymes aspartate kinase FUB3 and homoserine O-acetyltransferase FUB5, as well as enzymes of the primary metabolism. The polyketide synthase (PKS) FUB1 generates the triketide trans-2-hexenal which is presumptively released by the hydrolase FUB4 and linked to the NRPS-bound amino acid precursor by NAD(P)-dependent dehydrogenase FUB6. FUB1, FUB4, and the non-canonical NRPS Fub8 may form an enzyme complex. Further processing of the NRPS-bound intermediate might be carried out by FUB6 and the sulfhydrylase FUB7, enabling a spontaneous electrocyclization to close the carbon backbone of fusaric acid. Dihydrofusaric acid is likely to be released via reduction by the thioester reductase (TR) domain of FUB8 whereupon the final oxidation to fusaric acid may (also) be performed by the FMN-dependent dehydrogenase FUB9. This Gibberella moniliformis (strain M3125 / FGSC 7600) (Maize ear and stalk rot fungus) protein is Oxidase FUB9.